A 747-amino-acid chain; its full sequence is Endoglucanase D (747 aa).

The N-terminal stretch at 1 to 39 (MHSASRTRARTRVRTAVSGLLAATVLAAPLTLVAAPAQA) is a signal peptide. The active-site Proton donor is the Glu-208. Catalysis depends on Glu-349, which acts as the Nucleophile. Residues 456 to 475 (APTGLRAGTPTASTVPLTWS) form a disordered region. Fibronectin type-III domains follow at residues 456-543 (APTG…TAAG) and 552-639 (VPTG…TAPD). The span at 465–475 (PTASTVPLTWS) shows a compositional bias: polar residues. Residues 638–747 (PDPTTGSCAV…TVGGATCTTR (110 aa)) enclose the CBM2 domain.

This sequence belongs to the glycosyl hydrolase 5 (cellulase A) family.

The catalysed reaction is Endohydrolysis of (1-&gt;4)-beta-D-glucosidic linkages in cellulose, lichenin and cereal beta-D-glucans.. It participates in glycan metabolism; cellulose degradation. This chain is Endoglucanase D (cenD), found in Cellulomonas fimi.